Reading from the N-terminus, the 82-residue chain is UPF0335 protein pRhico085 (82 aa).

This sequence belongs to the UPF0335 family.

This Azospirillum brasilense protein is UPF0335 protein pRhico085.